Reading from the N-terminus, the 209-residue chain is Protein GrpE (209 aa).

Residues 1-13 are compositionally biased toward polar residues; sequence MSNDSSKAKQNQV. Residues 1-33 are disordered; it reads MSNDSSKAKQNQVDEAVEGEILTESEVETGNDE. The span at 15–31 shows a compositional bias: acidic residues; the sequence is EAVEGEILTESEVETGN.

Belongs to the GrpE family. Homodimer.

The protein resides in the cytoplasm. Functionally, participates actively in the response to hyperosmotic and heat shock by preventing the aggregation of stress-denatured proteins, in association with DnaK and GrpE. It is the nucleotide exchange factor for DnaK and may function as a thermosensor. Unfolded proteins bind initially to DnaJ; upon interaction with the DnaJ-bound protein, DnaK hydrolyzes its bound ATP, resulting in the formation of a stable complex. GrpE releases ADP from DnaK; ATP binding to DnaK triggers the release of the substrate protein, thus completing the reaction cycle. Several rounds of ATP-dependent interactions between DnaJ, DnaK and GrpE are required for fully efficient folding. This is Protein GrpE from Shewanella woodyi (strain ATCC 51908 / MS32).